The chain runs to 296 residues: Ribosomal protein L11 methyltransferase (296 aa).

Residues Thr145, Gly166, Asp188, and Asn230 each coordinate S-adenosyl-L-methionine.

It belongs to the methyltransferase superfamily. PrmA family.

The protein resides in the cytoplasm. The enzyme catalyses L-lysyl-[protein] + 3 S-adenosyl-L-methionine = N(6),N(6),N(6)-trimethyl-L-lysyl-[protein] + 3 S-adenosyl-L-homocysteine + 3 H(+). In terms of biological role, methylates ribosomal protein L11. This is Ribosomal protein L11 methyltransferase from Photorhabdus laumondii subsp. laumondii (strain DSM 15139 / CIP 105565 / TT01) (Photorhabdus luminescens subsp. laumondii).